We begin with the raw amino-acid sequence, 421 residues long: Serine hydroxymethyltransferase (421 aa).

(6S)-5,6,7,8-tetrahydrofolate is bound by residues L123 and 127–129; that span reads GHL. Position 232 is an N6-(pyridoxal phosphate)lysine (K232).

This sequence belongs to the SHMT family. As to quaternary structure, homodimer. Requires pyridoxal 5'-phosphate as cofactor.

It localises to the cytoplasm. The enzyme catalyses (6R)-5,10-methylene-5,6,7,8-tetrahydrofolate + glycine + H2O = (6S)-5,6,7,8-tetrahydrofolate + L-serine. The protein operates within one-carbon metabolism; tetrahydrofolate interconversion. It functions in the pathway amino-acid biosynthesis; glycine biosynthesis; glycine from L-serine: step 1/1. Its function is as follows. Catalyzes the reversible interconversion of serine and glycine with tetrahydrofolate (THF) serving as the one-carbon carrier. This reaction serves as the major source of one-carbon groups required for the biosynthesis of purines, thymidylate, methionine, and other important biomolecules. Also exhibits THF-independent aldolase activity toward beta-hydroxyamino acids, producing glycine and aldehydes, via a retro-aldol mechanism. This Ehrlichia canis (strain Jake) protein is Serine hydroxymethyltransferase.